The following is a 176-amino-acid chain: Peroxynitrite isomerase 1 (176 aa).

Residues 1–23 form a disordered region; it reads MDENSTLSPAHSDAAASSSANTP. Residues 8-20 are compositionally biased toward low complexity; sequence SPAHSDAAASSSA. Residues 37 to 43 carry the GXWXGXG motif; that stretch reads GLWRGEG. A heme b-binding site is contributed by His168.

It belongs to the nitrobindin family. Homodimer. It depends on heme b as a cofactor.

The catalysed reaction is peroxynitrite = nitrate. The protein operates within nitrogen metabolism. In terms of biological role, heme-binding protein able to scavenge peroxynitrite and to protect free L-tyrosine against peroxynitrite-mediated nitration, by acting as a peroxynitrite isomerase that converts peroxynitrite to nitrate. Therefore, this protein likely plays a role in peroxynitrite sensing and in the detoxification of reactive nitrogen and oxygen species (RNS and ROS, respectively). Is able to bind nitric oxide (NO) in vitro, but may act as a sensor of peroxynitrite levels in vivo. This chain is Peroxynitrite isomerase 1, found in Rhodococcus jostii (strain RHA1).